Here is a 298-residue protein sequence, read N- to C-terminus: Probable GTP 3',8-cyclase (298 aa).

Residues 4–227 (RYGREIRSFR…MQNRKKYVID (224 aa)) form the Radical SAM core domain. GTP is bound at residue Arg-13. [4Fe-4S] cluster contacts are provided by Cys-20 and Cys-24. Tyr-26 lines the S-adenosyl-L-methionine pocket. Cys-27 provides a ligand contact to [4Fe-4S] cluster. GTP is bound at residue Lys-61. Gly-65 lines the S-adenosyl-L-methionine pocket. Thr-91 is a binding site for GTP. Ser-115 is a binding site for S-adenosyl-L-methionine. Lys-152 is a binding site for GTP. [4Fe-4S] cluster-binding residues include Cys-243 and Cys-246. 248–250 (RIR) is a GTP binding site. Residue Cys-260 coordinates [4Fe-4S] cluster.

This sequence belongs to the radical SAM superfamily. MoaA family. The cofactor is [4Fe-4S] cluster.

It carries out the reaction GTP + AH2 + S-adenosyl-L-methionine = (8S)-3',8-cyclo-7,8-dihydroguanosine 5'-triphosphate + 5'-deoxyadenosine + L-methionine + A + H(+). Its pathway is cofactor biosynthesis; molybdopterin biosynthesis. In terms of biological role, catalyzes the cyclization of GTP to (8S)-3',8-cyclo-7,8-dihydroguanosine 5'-triphosphate. The protein is Probable GTP 3',8-cyclase of Methanococcus maripaludis (strain C6 / ATCC BAA-1332).